The following is a 555-amino-acid chain: Small ribosomal subunit protein uS3m (555 aa).

The interval 1–20 is disordered; that stretch reads MARKGNPISVRLGKNRSSDS.

It belongs to the universal ribosomal protein uS3 family.

The protein resides in the mitochondrion. The protein is Small ribosomal subunit protein uS3m (RPS3) of Brassica napus (Rape).